The following is a 362-amino-acid chain: UDP-N-acetylglucosamine--N-acetylmuramyl-(pentapeptide) pyrophosphoryl-undecaprenol N-acetylglucosamine transferase (362 aa).

Residues 15-17, N127, R165, S191, I247, 266-271, and Q292 contribute to the UDP-N-acetyl-alpha-D-glucosamine site; these read TGG and ALTVSE.

It belongs to the glycosyltransferase 28 family. MurG subfamily.

The protein localises to the cell inner membrane. The catalysed reaction is di-trans,octa-cis-undecaprenyl diphospho-N-acetyl-alpha-D-muramoyl-L-alanyl-D-glutamyl-meso-2,6-diaminopimeloyl-D-alanyl-D-alanine + UDP-N-acetyl-alpha-D-glucosamine = di-trans,octa-cis-undecaprenyl diphospho-[N-acetyl-alpha-D-glucosaminyl-(1-&gt;4)]-N-acetyl-alpha-D-muramoyl-L-alanyl-D-glutamyl-meso-2,6-diaminopimeloyl-D-alanyl-D-alanine + UDP + H(+). The protein operates within cell wall biogenesis; peptidoglycan biosynthesis. In terms of biological role, cell wall formation. Catalyzes the transfer of a GlcNAc subunit on undecaprenyl-pyrophosphoryl-MurNAc-pentapeptide (lipid intermediate I) to form undecaprenyl-pyrophosphoryl-MurNAc-(pentapeptide)GlcNAc (lipid intermediate II). The chain is UDP-N-acetylglucosamine--N-acetylmuramyl-(pentapeptide) pyrophosphoryl-undecaprenol N-acetylglucosamine transferase from Shewanella oneidensis (strain ATCC 700550 / JCM 31522 / CIP 106686 / LMG 19005 / NCIMB 14063 / MR-1).